Here is a 720-residue protein sequence, read N- to C-terminus: Heat shock protein homolog pss1 (720 aa).

S38 is modified (phosphoserine). Residue T39 is modified to Phosphothreonine. A compositionally biased stretch (basic and acidic residues) spans 658–690 (KRQKVQAEREAAKAATKSEAEKQKPSGKFEEGT). Residues 658-720 (KRQKVQAERE…ETMEIDEQKE (63 aa)) are disordered. Over residues 703-720 (VAPENEEVETMEIDEQKE) the composition is skewed to acidic residues.

Belongs to the heat shock protein 70 family.

Its subcellular location is the cytoplasm. Required for normal growth at various temperatures. This Schizosaccharomyces pombe (strain 972 / ATCC 24843) (Fission yeast) protein is Heat shock protein homolog pss1 (pss1).